A 99-amino-acid chain; its full sequence is Pterin-4-alpha-carbinolamine dehydratase (99 aa).

The protein belongs to the pterin-4-alpha-carbinolamine dehydratase family.

The catalysed reaction is (4aS,6R)-4a-hydroxy-L-erythro-5,6,7,8-tetrahydrobiopterin = (6R)-L-erythro-6,7-dihydrobiopterin + H2O. Involved in tetrahydrobiopterin biosynthesis. This is Pterin-4-alpha-carbinolamine dehydratase (pcbd) from Dictyostelium discoideum (Social amoeba).